The sequence spans 104 residues: Large ribosomal subunit protein uL24 (104 aa).

Belongs to the universal ribosomal protein uL24 family. Part of the 50S ribosomal subunit.

One of two assembly initiator proteins, it binds directly to the 5'-end of the 23S rRNA, where it nucleates assembly of the 50S subunit. Functionally, one of the proteins that surrounds the polypeptide exit tunnel on the outside of the subunit. This is Large ribosomal subunit protein uL24 from Enterobacter sp. (strain 638).